A 784-amino-acid polypeptide reads, in one-letter code: Replication protein A 70 kDa DNA-binding subunit E (784 aa).

Positions 114 to 224 are disordered; it reads HPVPGGKHND…NRGPVARNEA (111 aa). 2 stretches are compositionally biased toward polar residues: residues 132 to 148 and 167 to 190; these read KFNT…QVNN and SSVP…NGVT. The OB DNA-binding region spans 241 to 327; the sequence is WTIKARVTNK…RNDYEIMLDN (87 aa). The segment at 532 to 558 adopts a C4-type zinc-finger fold; it reads CPIMNGDRPCSKKVTDNGDGTWRCEKC. Disordered regions lie at residues 678-707 and 746-784; these read LPIN…PSSV and AKCP…VGSY. A compositionally biased stretch (polar residues) spans 695 to 707; it reads GIGSSGTRDPSSV. Residues 760 to 776 are compositionally biased toward gly residues; sequence YMGGSYRGTTGSYGGGL.

This sequence belongs to the replication factor A protein 1 family. As to quaternary structure, heterotrimer of RPA1, RPA2 and RPA3 (canonical replication protein A complex).

It is found in the nucleus. Functionally, component of the replication protein A complex (RPA) required for DNA recombination, repair and replication. The activity of RPA is mediated by single-stranded DNA binding and protein interactions. Probably involved in repair of double-strand DNA breaks (DSBs) induced by genotoxic stresses. In Arabidopsis thaliana (Mouse-ear cress), this protein is Replication protein A 70 kDa DNA-binding subunit E (RPA1E).